The sequence spans 865 residues: MSYTNKRHTYYGGFTNDLSDTFQYPQRTDEQRRKHVTFGPYILGSTLGEGEFGKVKLGWPKNFSNSSNSTFDFPKQVAIKLIKRDSISNDYRKEVKIYREINALKHLSHPNIVKLEEVLQNSRYIGIVLEYACGGEFYKYIQKKRRLKEMNACRLFSQLISGVHYIHSKGLVHRDLKLENLLLDKNENLVITDFGFVNEFCSRNELMKTSCGSPCYAAPELVISAEPYEARKADIWSCGVILYAILAGYLPWDDDPNNPEGSDIGRLYNYINSTPLKFPDYILPIPRDLLRRMLVSDPKKRINLKQIKKHEWLKPHSSFLSITPDEWDKLNNTQSVFRLAKPRRRYGSRPQSSCSTSSLGSRSDKRDSLVIDSTLITFPAPPQESQNHIITRPASIASDQRLSPIRRSNRHNRSNSAASVALQAVVNADREYVLSHEQSLSPVQNIRQTTGNMTASLSPPPAISPGDIIIETTPIKRNTISGSSIVPSLEEESSTTMQTSKIQPNNMASSQNHQYNKNKTQNSLQSAKNFYRTSSSSHTKPRPTSYHPGSYTTPPYNSNTLSIYEINEKAKSSASSQTLNQRDTSPFDSTPYLALDTCITSSSSIESSPKLITHGQFSVAKPSVDLQSVSGDLIKYKRDADVVTRIYDEKYKQKRKSLRYSGIFSDISCDTVTEESDELRPPESPLQQHEGQESIDKAKTEDTSEKGSKSSNIAKATAQKHVNNHLERSLNEAESTKKRFSFLSLYSYDTSKSSLYSSMDSKRKPSPPSQRRPKKDDSYQTNSKNHYITASNMQTSHQVSKDLPAPTMVQNKCTLETKKAVRSNRSSIMVSEVNKASVDNKAAQSPEHSTAKRVLGFFKRRSMKI.

One can recognise a Protein kinase domain in the interval 41–313 (YILGSTLGEG…LKQIKKHEWL (273 aa)). Residues 47-55 (LGEGEFGKV) and K80 contribute to the ATP site. D175 functions as the Proton acceptor in the catalytic mechanism. Positions 341-398 (KPRRRYGSRPQSSCSTSSLGSRSDKRDSLVIDSTLITFPAPPQESQNHIITRPASIAS) are disordered. The span at 352 to 361 (SSCSTSSLGS) shows a compositional bias: low complexity. S441 bears the Phosphoserine mark. Disordered regions lie at residues 480 to 554 (ISGS…YTTP), 673 to 733 (TEES…LNEA), and 754 to 782 (SLYSSMDSKRKPSPPSQRRPKKDDSYQTN). The segment covering 494–538 (STTMQTSKIQPNNMASSQNHQYNKNKTQNSLQSAKNFYRTSSSSH) has biased composition (polar residues). Composition is skewed to basic and acidic residues over residues 690 to 708 (EGQESIDKAKTEDTSEKGS) and 724 to 733 (NHLERSLNEA).

Belongs to the protein kinase superfamily. Ser/Thr protein kinase family. Interacts with FAA3, POL5 and TPA1.

Its subcellular location is the cytoplasm. It carries out the reaction L-seryl-[protein] + ATP = O-phospho-L-seryl-[protein] + ADP + H(+). It catalyses the reaction L-threonyl-[protein] + ATP = O-phospho-L-threonyl-[protein] + ADP + H(+). Its function is as follows. Putative serine/threonine-protein kinase that may be involved in rRNA transcription and ribosome biogenesis. The polypeptide is Fatty acyl-CoA synthetase and RNA processing-associated kinase 1 (FRK1) (Saccharomyces cerevisiae (strain ATCC 204508 / S288c) (Baker's yeast)).